Reading from the N-terminus, the 359-residue chain is Probable dual-specificity RNA methyltransferase RlmN (359 aa).

Catalysis depends on E99, which acts as the Proton acceptor. Residues 105 to 342 (TENRRTACVS…VTIRKSYGTT (238 aa)) enclose the Radical SAM core domain. Residues C112 and C347 are joined by a disulfide bond. The [4Fe-4S] cluster site is built by C119, C123, and C126. S-adenosyl-L-methionine contacts are provided by residues 171–172 (GE), S204, 227–229 (SLH), and N304. Catalysis depends on C347, which acts as the S-methylcysteine intermediate.

It belongs to the radical SAM superfamily. RlmN family. It depends on [4Fe-4S] cluster as a cofactor.

The protein resides in the cytoplasm. It carries out the reaction adenosine(2503) in 23S rRNA + 2 reduced [2Fe-2S]-[ferredoxin] + 2 S-adenosyl-L-methionine = 2-methyladenosine(2503) in 23S rRNA + 5'-deoxyadenosine + L-methionine + 2 oxidized [2Fe-2S]-[ferredoxin] + S-adenosyl-L-homocysteine. The enzyme catalyses adenosine(37) in tRNA + 2 reduced [2Fe-2S]-[ferredoxin] + 2 S-adenosyl-L-methionine = 2-methyladenosine(37) in tRNA + 5'-deoxyadenosine + L-methionine + 2 oxidized [2Fe-2S]-[ferredoxin] + S-adenosyl-L-homocysteine. Its function is as follows. Specifically methylates position 2 of adenine 2503 in 23S rRNA and position 2 of adenine 37 in tRNAs. This Pelodictyon phaeoclathratiforme (strain DSM 5477 / BU-1) protein is Probable dual-specificity RNA methyltransferase RlmN.